The sequence spans 135 residues: Small ribosomal subunit protein bS16 (135 aa).

The protein belongs to the bacterial ribosomal protein bS16 family.

This chain is Small ribosomal subunit protein bS16, found in Prosthecochloris aestuarii (strain DSM 271 / SK 413).